The following is a 206-amino-acid chain: Thymidylate kinase (206 aa).

Residue 11 to 18 (GIDGAGKT) coordinates ATP.

The protein belongs to the thymidylate kinase family.

The enzyme catalyses dTMP + ATP = dTDP + ADP. In terms of biological role, phosphorylation of dTMP to form dTDP in both de novo and salvage pathways of dTTP synthesis. The sequence is that of Thymidylate kinase from Burkholderia cenocepacia (strain ATCC BAA-245 / DSM 16553 / LMG 16656 / NCTC 13227 / J2315 / CF5610) (Burkholderia cepacia (strain J2315)).